The sequence spans 75 residues: Small ribosomal subunit protein bS16 (75 aa).

Belongs to the bacterial ribosomal protein bS16 family.

This is Small ribosomal subunit protein bS16 from Campylobacter lari (strain RM2100 / D67 / ATCC BAA-1060).